Here is a 187-residue protein sequence, read N- to C-terminus: Protein ECM23 (187 aa).

2 disordered regions span residues G106–G127 and K167–K187. The GATA-type zinc finger occupies N126–K180.

Its function is as follows. Involved in morphogenesis. May be involved in cell wall organization and biogenesis. In Saccharomyces cerevisiae (strain ATCC 204508 / S288c) (Baker's yeast), this protein is Protein ECM23 (ECM23).